The primary structure comprises 165 residues: Peptide deformylase (165 aa).

Cys-88 and His-130 together coordinate Fe cation. The active site involves Glu-131. Residue His-134 participates in Fe cation binding.

Belongs to the polypeptide deformylase family. Fe(2+) serves as cofactor.

The catalysed reaction is N-terminal N-formyl-L-methionyl-[peptide] + H2O = N-terminal L-methionyl-[peptide] + formate. Its function is as follows. Removes the formyl group from the N-terminal Met of newly synthesized proteins. Requires at least a dipeptide for an efficient rate of reaction. N-terminal L-methionine is a prerequisite for activity but the enzyme has broad specificity at other positions. This chain is Peptide deformylase, found in Borreliella burgdorferi (strain ATCC 35210 / DSM 4680 / CIP 102532 / B31) (Borrelia burgdorferi).